The following is a 555-amino-acid chain: AP2-like ethylene-responsive transcription factor ANT (555 aa).

2 disordered regions span residues 34–56 (GGRE…SVPP) and 199–231 (LSMS…NHQQ). Composition is skewed to low complexity over residues 41–53 (SSST…SSSS), 199–208 (LSMSPGSQSS), and 218–231 (QNQN…NHQQ). DNA-binding regions (AP2/ERF) lie at residues 283-349 (QYRG…TNFS) and 385-443 (IYRG…TNFD).

The protein belongs to the AP2/ERF transcription factor family. AP2 subfamily. As to quaternary structure, interacts with ANL2, HDG2 and HDG10, and possibly with GL2, HDG3, HDG8, ATML1 and PDF2. In terms of tissue distribution, mostly expressed in developing flowers. Also present in mature flowers, siliques and seedlings, but not in mature roots, leaves and stems. Expressed in ovules and in vegetative and floral primordia.

Its subcellular location is the nucleus. Functionally, transcription activator that recognizes and binds to the DNA consensus sequence 5'-CAC[AG]N[AT]TNCCNANG-3'. Required for the initiation and growth of ovules integumenta, and for the development of female gametophyte. Plays a critical role in the development of gynoecium marginal tissues (e.g. stigma, style and septa), and in the fusion of carpels and of medial ridges leading to ovule primordia. Also involved in organs initiation and development, including floral organs. Maintains the meristematic competence of cells and consequently sustains expression of cell cycle regulators during organogenesis, thus controlling the final size of each organ by controlling their cell number. Regulates INO autoinduction and expression pattern. As ANT promotes petal cell identity and mediates down-regulation of AG in flower whorl 2, it functions as a class A homeotic gene. This chain is AP2-like ethylene-responsive transcription factor ANT, found in Arabidopsis thaliana (Mouse-ear cress).